Consider the following 370-residue polypeptide: 3,5-dihydroxyphenylacetyl-CoA synthase (370 aa).

Residue Cys-158 is part of the active site.

This sequence belongs to the thiolase-like superfamily. Chalcone/stilbene synthases family.

It carries out the reaction 4 malonyl-CoA + 4 H(+) = (3,5-dihydroxyphenyl)acetyl-CoA + 4 CO2 + 3 CoA + H2O. It functions in the pathway antibiotic biosynthesis; vancomycin biosynthesis. Its function is as follows. Involved in the biosynthesis of the nonproteinogenic amino acid monomer (S)-3,5-dihydroxyphenylglycine (Dpg) responsible of the production of vancomycin and teicoplanin antibiotics. Catalyzes the Claisen condensation of four molecules of malonyl-CoA to yield 3,5-dihydroxyphenylacetyl-CoA (DPA-CoA) and three free coenzyme A (CoA). DpgA requires the presence of the dehydratases DpgB and DpgD to facilitate the aromatization of the DPA-S-DgpA or DPA-S-CoA intermediate. The polypeptide is 3,5-dihydroxyphenylacetyl-CoA synthase (dpgA) (Amycolatopsis orientalis (Nocardia orientalis)).